The sequence spans 115 residues: Ustilagic acid biosynthesis cluster protein orf3 (115 aa).

Positions 1-38 (MTYSKIACSLGKRGIARAPNQASSFFLLLFLFAKFSQQ) are cleaved as a signal peptide. The segment at 42–62 (SPCLASSGVAKSRGPASTDRP) is disordered.

Its pathway is secondary metabolite biosynthesis. Its function is as follows. Part of the gene cluster that mediates the biosynthesis of the glycolipid biosurfactant ustilagic acid (UA). UA is a secreted cellobiose glycolipid that is toxic for many microorganisms and confers biocontrol activity to U.maydis. UA consists of 15,16-dihydroxypalmitic or 2,15,16-trihydroxypalmitic acid, which is O-glycosidically linked to cellobiose at its terminal hydroxyl group. In addition, the cellobiose moiety is acetylated and acylated with a short-chain hydroxy fatty acid. UA biosynthesis starts with omega-hydroxylation of palmitic acid catalyzed by the cytochrome P450 monooxygenase cyp1. Terminal hydroxylation of palmitic acid precedes subterminal hydroxylation catalyzed by the cytochrome P450 monooxygenase cyp2. Sequential glucosylation of the hydroxy fatty acid is probably catalyzed by the glycosyltransferase ugt1. The cellobiose lipid is further decorated by acetylation of the proximal glucose residue and by acylation with a short-chain beta-hydroxy fatty acid at the distal glucose residue. The acyltransferase uat1 may be a good candidate for catalyzing either acetylation or acylation of the cellobiose lipid. The fatty acid synthase fas2 may be involved in synthesis of the carbon backbone of the short-chain beta-hydroxy fatty acid esterified to the cellobiose disaccharide. The secreted UA consists of a mixture of both alpha-hydroxylated and non-hydroxylated glycolipids; therefore, alpha-hydroxylation of the long-chain fatty, catalyzed by the fatty acid hydroxylase ahd1, occurs late in UA biosynthesis and may be the last step before secretion. The polypeptide is Ustilagic acid biosynthesis cluster protein orf3 (Mycosarcoma maydis (Corn smut fungus)).